The primary structure comprises 320 residues: SPX domain-containing protein 4 (320 aa).

Residues 1-170 enclose the SPX domain; it reads MKFGKDFRSH…GGLLSLPFTQ (170 aa). Disordered stretches follow at residues 209–233 and 275–320; these read SSSA…VDVE and CSGA…PRDE. Residues 278–289 show a composition bias toward polar residues; sequence AITSESDSYSDS. Residues 290-299 show a composition bias toward acidic residues; the sequence is QIEDAEDDDK. Positions 304–313 are enriched in polar residues; the sequence is REQNTAQNAA.

Homodimer. Interacts (via N-terminus) with PHR2 (via C-terminus) in the presence of inositol polyphosphate. Interacts with BHLH6. In terms of processing, degraded under Pi starvation conditions through the ubiquitin/26S proteasome pathway. Widely expressed. Detected in root cells, with the exception of epidermis, and in mesophyll and vascular bundles in leaves.

It is found in the membrane. It localises to the nucleus. Its subcellular location is the cytoplasm. Functionally, inositol polyphosphate sensor that associates with transcription factors to regulate Pi starvation responses. The SPX domain provides a basic binding surface for inositol polyphosphate signaling molecules. Interacts with PHR2 to inhibit its translocation to the nucleus and repress its DNA-binding activity, and then negatively regulate Pi signaling. This Oryza sativa subsp. japonica (Rice) protein is SPX domain-containing protein 4.